Here is a 332-residue protein sequence, read N- to C-terminus: Fructose-1,6-bisphosphatase class 1 (332 aa).

4 residues coordinate Mg(2+): E93, D113, L115, and D116. Substrate is bound by residues 116–119 (DGSS), N209, Y235, and K272. E278 is a binding site for Mg(2+).

It belongs to the FBPase class 1 family. In terms of assembly, homotetramer. Mg(2+) is required as a cofactor.

Its subcellular location is the cytoplasm. It catalyses the reaction beta-D-fructose 1,6-bisphosphate + H2O = beta-D-fructose 6-phosphate + phosphate. The protein operates within carbohydrate biosynthesis; gluconeogenesis. In Syntrophus aciditrophicus (strain SB), this protein is Fructose-1,6-bisphosphatase class 1.